Reading from the N-terminus, the 595-residue chain is D-xylonate dehydratase (595 aa).

Residue cysteine 64 coordinates [2Fe-2S] cluster. Glutamate 96 lines the Mg(2+) pocket. Cysteine 132 serves as a coordination point for [2Fe-2S] cluster. Residue aspartate 133 coordinates Mg(2+). Residue cysteine 205 participates in [2Fe-2S] cluster binding. Residue glutamate 467 coordinates Mg(2+).

The protein belongs to the IlvD/Edd family. In terms of assembly, homotetramer. [2Fe-2S] cluster serves as cofactor. Requires Mg(2+) as cofactor.

The catalysed reaction is D-xylonate = 2-dehydro-3-deoxy-D-arabinonate + H2O. It catalyses the reaction D-gluconate = 2-dehydro-3-deoxy-D-gluconate + H2O. Its pathway is carbohydrate metabolism; D-xylose degradation. Its function is as follows. Catalyzes the dehydration of D-xylonate to 2-dehydro-3-deoxy-D-arabinonate during D-xylose degradation. Can also dehydrate D-gluconate, with similar catalytic efficiency. Has weak activity with D-galactonate, D-fuconate and L-arabinonate. This is D-xylonate dehydratase from Caulobacter vibrioides (strain ATCC 19089 / CIP 103742 / CB 15) (Caulobacter crescentus).